We begin with the raw amino-acid sequence, 465 residues long: UDP-N-acetylmuramate--L-alanine ligase (465 aa).

118–124 contributes to the ATP binding site; the sequence is GTHGKTT.

The protein belongs to the MurCDEF family.

The protein localises to the cytoplasm. The catalysed reaction is UDP-N-acetyl-alpha-D-muramate + L-alanine + ATP = UDP-N-acetyl-alpha-D-muramoyl-L-alanine + ADP + phosphate + H(+). It functions in the pathway cell wall biogenesis; peptidoglycan biosynthesis. In terms of biological role, cell wall formation. The polypeptide is UDP-N-acetylmuramate--L-alanine ligase (Ruegeria pomeroyi (strain ATCC 700808 / DSM 15171 / DSS-3) (Silicibacter pomeroyi)).